We begin with the raw amino-acid sequence, 203 residues long: Sporulation delaying protein C (203 aa).

Residues 1-32 form the signal peptide; that stretch reads MKSKLLRLLIVSMVTILVFSLVGLSKESSTSA. Positions 33–140 are cleaved as a propeptide — removed in mature form; it reads KENHTFSGED…KYSSNKVTPS (108 aa). Cys-141 and Cys-147 are joined by a disulfide. A propeptide spans 183–203 (removed in mature form); that stretch reads SASNNSDLEAAAAKTLKLIHQ.

In terms of assembly, proprotein probably interacts with chaperone CsaA. Production of active SDP (able to induce SdpI and kill cells) is a multi-step process that requires signal peptide cleavage (probably by SipS or SipT) as well as SdpA and SdpB. The disulfide bond is not required for maximum toxicity.

The protein localises to the secreted. Functionally, produces a 42-residue extracellular sporulation delaying protein (SDP) that collapses the proton motive force (probably both the membrane potential and pH gradient) across the cell membrane, which leads to autolysis; may form a proton channel. Induces the lysis of other B.subtilis cells that have not entered the sporulation pathway, inducing cannibalism to provide a source of nutrients to support sporulation, and at the same time delaying commitment to the energetically expensive and irreversible onset of sporulation. Addition of SDP to liquid cultures halts growth, leads to increased cell permeability and eventually cell lysis in a significant subset of the population, although some cells survive and resume growth after a lag period. Effects of SDP are irreversible within 10 minutes. Addition of SDP to solid cultures induces killing, it is much more effective than SKF (AC O31422). Has antibiotic action against Gram-positive Firmicutes (L.acidophilus, M.megaterium, P.polymyxa, S.aureus, S.epidermidis) but not Actinobacteria M.luteus or Gram-negative P.aeruginosa or K.pneumoniae. SDP induces expression of the sdpR-sdpI operon. Its maturation is dependent on SdpA and SdpB. Also functions as a ligand, binds to SdpI triggering a signal transduction cascade that protects the cell against the toxic effects of its own SDP. This chain is Sporulation delaying protein C, found in Bacillus subtilis (strain 168).